A 600-amino-acid polypeptide reads, in one-letter code: Estrogen receptor (600 aa).

A modulating (transactivation AF-1); mediates interaction with MACROD1 region spans residues 1-189; the sequence is MTMTLHTKAS…IMESAKETRY (189 aa). O-linked (GlcNAc) serine glycosylation occurs at Ser-10. A required for interaction with NCOA1 region spans residues 35 to 47; sequence MERALGEVYVDNS. The interval 35 to 179 is interaction with DDX5; self-association; the sequence is MERALGEVYV…LSSSSEKGNM (145 aa). Residues Ser-109 and Ser-111 each carry the phosphoserine; by CDK2 modification. Ser-123 carries the phosphoserine modification. A disordered region spans residues 148–177; sequence DTGPPAFYRSNSDNRRQNGRERLSSSSEKG. Over residues 159–170 the composition is skewed to basic and acidic residues; the sequence is SDNRRQNGRERL. Position 172 is a phosphoserine; by CK2 (Ser-172). 2 NR C4-type zinc fingers span residues 190–210 and 226–250; these read CAVC…CEGC and CPAT…LRKC. The segment at residues 190 to 255 is a DNA-binding region (nuclear receptor); that stretch reads CAVCNDYASG…RLRKCYEVGM (66 aa). The interval 190 to 315 is mediates interaction with DNTTIP2; that stretch reads CAVCNDYASG…TKKNSPALSL (126 aa). Residues 256–315 form a hinge region; it reads MKGGIRKDRRGGRMLKHKRQRDDLEGRNEMGTSGDMRAANLWPSPLVIKHTKKNSPALSL. An Asymmetric dimethylarginine; by PRMT1 modification is found at Arg-265. The segment at 267 to 600 is interaction with AKAP13; sequence GRMLKHKRQR…PEAEGFPNTI (334 aa). The interval 269–600 is self-association; the sequence is MLKHKRQRDD…PEAEGFPNTI (332 aa). The NR LBD domain maps to 316-552; it reads TADQMVSALL…DLLLEMLDAH (237 aa). Residues 316–600 are transactivation AF-2; it reads TADQMVSALL…PEAEGFPNTI (285 aa). The 17beta-estradiol site is built by Glu-358 and Arg-399. A lipid anchor (S-palmitoyl cysteine) is attached at Cys-452. His-529 is a 17beta-estradiol binding site. The residue at position 542 (Tyr-542) is a Phosphotyrosine; by Tyr-kinases. Residues 558-581 form a disordered region; that stretch reads ASRMGVPPEEPSQSQLTTTSSTSA. Positions 569-581 are enriched in low complexity; that stretch reads SQSQLTTTSSTSA. The O-linked (GlcNAc) threonine glycan is linked to Thr-576.

This sequence belongs to the nuclear hormone receptor family. NR3 subfamily. Interacts with BCAS3. Binds DNA as a homodimer. Can form a heterodimer with ESR2. Interacts with coactivator NCOA5. Interacts with PELP1, the interaction is enhanced by 17-beta-estradiol; the interaction increases ESR1 transcriptional activity. Interacts with NCOA7; the interaction is ligand-inducible. Interacts with AKAP13, CUEDC2, HEXIM1, KDM5A, MAP1S, SMARD1, and UBE1C. Interacts with MUC1; the interaction is stimulated by 7 beta-estradiol (E2) and enhances ESR1-mediated transcription. Interacts with DNTTIP2, and UIMC1. Interacts with KMT2D/MLL2. Interacts with ATAD2; the interaction is enhanced by estradiol. Interacts with KIF18A and LDB1. Interacts with RLIM (via its C-terminus). Interacts with MACROD1. Interacts with SH2D4A and PLCG. Interacts with SH2D4A; the interaction blocks binding to PLCG and inhibits estrogen-induced cell proliferation. Interacts with DYNLL1. Interacts with CCDC62; the interaction requires estradiol and appears to enhance the transcription of target genes. Interacts with NR2C1; the interaction prevents homodimerization of ESR1 and suppresses its transcriptional activity and cell growth. Interacts with DNAAF4. Interacts with PRMT2. Interacts with RBFOX2. Interacts with EP300; the interaction is estrogen-dependent and enhanced by CITED1. Interacts with CITED1; the interaction is estrogen-dependent. Interacts with FAM120B, FOXL2, PHB2 and SLC30A9. Interacts with coactivators NCOA3 and NCOA6. Interacts with STK3/MST2 only in the presence of SAV1 and vice-versa. Binds to CSNK1D. Interacts with NCOA2; NCOA2 can interact with ESR1 AF-1 and AF-2 domains simultaneously and mediate their transcriptional synergy. Interacts with DDX5. Interacts with NCOA1; the interaction seems to require a self-association of N-terminal and C-terminal regions. Interacts with ZNF366, DDX17, NFKB1, RELA, SP1 and SP3. Interacts with NRIP1. Interacts with GPER1; the interaction occurs in an estrogen-dependent manner. Interacts with TRIP4 (ufmylated); estrogen dependent. Interacts with LMTK3; the interaction phosphorylates ESR1 (in vitro) and protects it against proteasomal degradation. Interacts with CCAR2 (via N-terminus) in a ligand-independent manner. Interacts with ZFHX3. Interacts with SFR1 in a ligand-dependent and -independent manner. Interacts with DCAF13, LATS1 and DCAF1; regulates ESR1 ubiquitination and ubiquitin-mediated proteasomal degradation. Interacts (via DNA-binding domain) with POU4F2 (C-terminus); this interaction increases the estrogen receptor ESR1 transcriptional activity in a DNA- and ligand 17-beta-estradiol-independent manner. Interacts with ESRRB isoform 1. Interacts with UBE3A and WBP2. Interacts with GTF2B. Interacts with RBM39. In the absence of hormonal ligand, interacts with TACC1. Interacts with PI3KR1 or PI3KR2 and PTK2/FAK1. Interacts with SRC. Interacts with BAG1; the interaction is promoted in the absence of estradiol (17-beta-estradiol/E2). Interacts with and ubiquitinated by STUB1; the interaction is promoted in the absence of estradiol (17-beta-estradiol/E2). Interacts with NEDD8. Post-translationally, phosphorylated by cyclin A/CDK2 and CK1. Phosphorylation probably enhances transcriptional activity. Dephosphorylation at Ser-123 by PPP5C inhibits its transactivation activity. Phosphorylated by LMTK3 (in vitro). In terms of processing, ubiquitinated; regulated by LATS1 via DCAF1 it leads to ESR1 proteasomal degradation. Deubiquitinated by OTUB1. Ubiquitinated by STUB1/CHIP; in the CA1 hippocampal region following loss of endogenous circulating estradiol (17-beta-estradiol/E2). Ubiquitinated by UBR5, leading to its degradation: UBR5 specifically recognizes and binds ligand-bound ESR1 when it is not associated with coactivators (NCOAs). In presence of NCOAs, the UBR5-degron is not accessible, preventing its ubiquitination and degradation. Palmitoylated at Cys-452 by ZDHHC7 and ZDHHC21. This modification is required for plasma membrane targeting and for rapid intracellular signaling via ERK and AKT kinases and cAMP generation, but not for signaling mediated by the nuclear hormone receptor. Post-translationally, dimethylated by PRMT1 at Arg-265. The methylation may favor cytoplasmic localization. Demethylated by JMJD6 at Arg-265. In terms of tissue distribution, expressed in the CA1 region of the hippocampus, expression decreases with age (at protein level). Expressed in the uterus (at protein level).

It localises to the nucleus. The protein localises to the cytoplasm. It is found in the golgi apparatus. Its subcellular location is the cell membrane. Its function is as follows. Nuclear hormone receptor. The steroid hormones and their receptors are involved in the regulation of eukaryotic gene expression and affect cellular proliferation and differentiation in target tissues. Ligand-dependent nuclear transactivation involves either direct homodimer binding to a palindromic estrogen response element (ERE) sequence or association with other DNA-binding transcription factors, such as AP-1/c-Jun, c-Fos, ATF-2, Sp1 and Sp3, to mediate ERE-independent signaling. Ligand binding induces a conformational change allowing subsequent or combinatorial association with multiprotein coactivator complexes through LXXLL motifs of their respective components. Mutual transrepression occurs between the estrogen receptor (ER) and NF-kappa-B in a cell-type specific manner. Decreases NF-kappa-B DNA-binding activity and inhibits NF-kappa-B-mediated transcription from the IL6 promoter and displace RELA/p65 and associated coregulators from the promoter. Recruited to the NF-kappa-B response element of the CCL2 and IL8 promoters and can displace CREBBP. Present with NF-kappa-B components RELA/p65 and NFKB1/p50 on ERE sequences. Can also act synergistically with NF-kappa-B to activate transcription involving respective recruitment adjacent response elements; the function involves CREBBP. Can activate the transcriptional activity of TFF1. Also mediates membrane-initiated estrogen signaling involving various kinase cascades. Essential for MTA1-mediated transcriptional regulation of BRCA1 and BCAS3. Maintains neuronal survival in response to ischemic reperfusion injury when in the presence of circulating estradiol (17-beta-estradiol/E2). This Rattus norvegicus (Rat) protein is Estrogen receptor (Esr1).